Reading from the N-terminus, the 421-residue chain is UDP-N-acetylglucosamine 1-carboxyvinyltransferase (421 aa).

22–23 (KN) contributes to the phosphoenolpyruvate binding site. Arg93 is a UDP-N-acetyl-alpha-D-glucosamine binding site. Cys117 (proton donor) is an active-site residue. Cys117 carries the 2-(S-cysteinyl)pyruvic acid O-phosphothioketal modification. Residues 122 to 126 (RPVDL), Asp308, and Ile330 contribute to the UDP-N-acetyl-alpha-D-glucosamine site.

The protein belongs to the EPSP synthase family. MurA subfamily.

It localises to the cytoplasm. It carries out the reaction phosphoenolpyruvate + UDP-N-acetyl-alpha-D-glucosamine = UDP-N-acetyl-3-O-(1-carboxyvinyl)-alpha-D-glucosamine + phosphate. Its pathway is cell wall biogenesis; peptidoglycan biosynthesis. Functionally, cell wall formation. Adds enolpyruvyl to UDP-N-acetylglucosamine. This Pseudomonas fluorescens (strain ATCC BAA-477 / NRRL B-23932 / Pf-5) protein is UDP-N-acetylglucosamine 1-carboxyvinyltransferase.